A 279-amino-acid polypeptide reads, in one-letter code: Probable endonuclease 4 (279 aa).

Zn(2+) contacts are provided by His66, His106, Glu142, Asp176, His179, His213, Asp226, His228, and Glu258.

It belongs to the AP endonuclease 2 family. Zn(2+) is required as a cofactor.

It carries out the reaction Endonucleolytic cleavage to 5'-phosphooligonucleotide end-products.. Functionally, endonuclease IV plays a role in DNA repair. It cleaves phosphodiester bonds at apurinic or apyrimidinic (AP) sites, generating a 3'-hydroxyl group and a 5'-terminal sugar phosphate. The chain is Probable endonuclease 4 from Photobacterium profundum (strain SS9).